The following is a 268-amino-acid chain: Fibroblast growth factor 5 (268 aa).

Residues 1–20 (MSLSFLLLLFFSHLILSAWA) form the signal peptide. Residues 26–81 (LAPKGQPGPAATDRNPRGSSSRQSSSSAMSSSSASSSPAASLGSQGSGLEQSSFQW) are disordered. Residues 43–80 (GSSSRQSSSSAMSSSSASSSPAASLGSQGSGLEQSSFQ) show a composition bias toward low complexity. An N-linked (GlcNAc...) asparagine glycan is attached at asparagine 110. A disordered region spans residues 233–255 (VPEKKKPPSPIKPKIPLSAPRKN).

Belongs to the heparin-binding growth factors family. In terms of assembly, interacts with FGFR1 and FGFR2. Affinity between fibroblast growth factors (FGFs) and their receptors is increased by heparan sulfate glycosaminoglycans that function as coreceptors. As to expression, expressed in neonatal brain.

Its subcellular location is the secreted. Plays an important role in the regulation of cell proliferation and cell differentiation. Required for normal regulation of the hair growth cycle. Functions as an inhibitor of hair elongation by promoting progression from anagen, the growth phase of the hair follicle, into catagen the apoptosis-induced regression phase. The sequence is that of Fibroblast growth factor 5 (FGF5) from Homo sapiens (Human).